A 325-amino-acid polypeptide reads, in one-letter code: ATP synthase gamma chain (325 aa).

It belongs to the ATPase gamma chain family. As to quaternary structure, F-type ATPases have 2 components, CF(1) - the catalytic core - and CF(0) - the membrane proton channel. CF(1) has five subunits: alpha(3), beta(3), gamma(1), delta(1), epsilon(1). CF(0) has three main subunits: a, b and c.

Its subcellular location is the cell membrane. Produces ATP from ADP in the presence of a proton gradient across the membrane. The gamma chain is believed to be important in regulating ATPase activity and the flow of protons through the CF(0) complex. The polypeptide is ATP synthase gamma chain (Corynebacterium diphtheriae (strain ATCC 700971 / NCTC 13129 / Biotype gravis)).